Here is a 212-residue protein sequence, read N- to C-terminus: Pyrrolidone-carboxylate peptidase (212 aa).

Active-site residues include glutamate 80, cysteine 143, and histidine 165.

Belongs to the peptidase C15 family. Homotetramer.

The protein localises to the cytoplasm. The enzyme catalyses Release of an N-terminal pyroglutamyl group from a polypeptide, the second amino acid generally not being Pro.. Functionally, removes 5-oxoproline from various penultimate amino acid residues except L-proline. The protein is Pyrrolidone-carboxylate peptidase of Vibrio parahaemolyticus serotype O3:K6 (strain RIMD 2210633).